Here is a 200-residue protein sequence, read N- to C-terminus: MTMMISEVTFNKIFPHAVKGVYQAISAQIEKAGCVNKMQQAMFLAQCGHESGGFIRFKENLNYSWLGLSQTFRKYFPDPLTAKKYERKPELIANRIYANRLGNGDEKSGDGWKYRGRGLIQITGKDNYAAFRKWLGRDIEPEDVAGNLDLSVKTAVWYWKCYELAELNSVEKVTRRINGGLNGIDERCKLYRALMVTDND.

The protein belongs to the glycosyl hydrolase 19 family.

This chain is Glycosyl hydrolase family 19 domain-containing protein HI_1415, found in Haemophilus influenzae (strain ATCC 51907 / DSM 11121 / KW20 / Rd).